We begin with the raw amino-acid sequence, 160 residues long: Major pollen allergen Car b 1 isoform 2 (160 aa).

Belongs to the BetVI family.

The protein is Major pollen allergen Car b 1 isoform 2 of Carpinus betulus (European hornbeam).